A 258-amino-acid polypeptide reads, in one-letter code: Bidirectional sugar transporter SWEET7 (258 aa).

Over 1–11 the chain is Extracellular; the sequence is MVFAHLNLLRK. A helical membrane pass occupies residues 12–32; sequence IVGIIGNFIALCLFLSPTPTF. Residues 12 to 100 form the MtN3/slv 1 domain; the sequence is IVGIIGNFIA…IFFVYCGRQK (89 aa). Residues 33–46 are Cytoplasmic-facing; sequence VRIVKKKSVEEYSP. The helical transmembrane segment at 47–67 threads the bilayer; sequence IPYLATLINCLVWVLYGLPTV. The Extracellular segment spans residues 68-73; it reads HPDSTL. The chain crosses the membrane as a helical span at residues 74 to 94; sequence VITINGTGILIEIVFLTIFFV. At 95 to 102 the chain is on the cytoplasmic side; the sequence is YCGRQKQR. A helical transmembrane segment spans residues 103-123; the sequence is LIISAVIAAETAFIAILAVLV. Topologically, residues 124–134 are extracellular; sequence LTLQHTTEKRT. Residues 135–155 form a helical membrane-spanning segment; sequence MSVGIVCCVFNVMMYASPLSV. Residues 136–221 enclose the MtN3/slv 2 domain; the sequence is SVGIVCCVFN…LYGAYYKSTK (86 aa). Over 156–166 the chain is Cytoplasmic; sequence MKMVIKTKSVE. The chain crosses the membrane as a helical span at residues 167–187; that stretch reads FMPFWLSVAGFLNAGVWTIYA. Over 188-193 the chain is Extracellular; the sequence is LMPFDP. A helical membrane pass occupies residues 194–214; that stretch reads FMAIPNGIGCLFGLAQLILYG. The Cytoplasmic portion of the chain corresponds to 215-258; sequence AYYKSTKRIMAERENQPGYVGLSSAIARTGSEKTANTNQEPNNV.

The protein belongs to the SWEET sugar transporter family. Forms heterooligomers with SWEET8, SWEET11, SWEET13, SWEET16 and SWEET17.

The protein resides in the cell membrane. Mediates both low-affinity uptake and efflux of sugar across the plasma membrane. The polypeptide is Bidirectional sugar transporter SWEET7 (Arabidopsis thaliana (Mouse-ear cress)).